Reading from the N-terminus, the 775-residue chain is tRNA(Met) cytidine acetyltransferase TmcA (775 aa).

Disordered stretches follow at residues 1–33 (MPTTVSGPIKSVPGERRDRQVHTGASATTGMDI) and 191–215 (TVEQDGLTDPPPSRPVPSPTPPTDA). The span at 199–212 (DPPPSRPVPSPTPP) shows a compositional bias: pro residues. Residues Gln230, 254-263 (GRGKSSAAGL), and Arg403 each bind ATP. The N-acetyltransferase domain maps to 438 to 623 (VEYRQLSAAD…YSVVMLDPCS (186 aa)). Acetyl-CoA is bound by residues 549–551 (IAT), 556–562 (RSRGLGS), and Glu588.

The protein belongs to the RNA cytidine acetyltransferase family. TmcA subfamily.

Its subcellular location is the cytoplasm. The enzyme catalyses cytidine(34) in elongator tRNA(Met) + acetyl-CoA + ATP + H2O = N(4)-acetylcytidine(34) in elongator tRNA(Met) + ADP + phosphate + CoA + H(+). In terms of biological role, catalyzes the formation of N(4)-acetylcytidine (ac(4)C) at the wobble position of tRNA(Met), by using acetyl-CoA as an acetyl donor and ATP (or GTP). In Haloarcula marismortui (strain ATCC 43049 / DSM 3752 / JCM 8966 / VKM B-1809) (Halobacterium marismortui), this protein is tRNA(Met) cytidine acetyltransferase TmcA.